We begin with the raw amino-acid sequence, 122 residues long: Large ribosomal subunit protein uL14c (122 aa).

This sequence belongs to the universal ribosomal protein uL14 family. In terms of assembly, part of the 50S ribosomal subunit.

It localises to the plastid. The protein localises to the chloroplast. Binds to 23S rRNA. The protein is Large ribosomal subunit protein uL14c of Pleurastrum terricola (Filamentous green alga).